A 222-amino-acid polypeptide reads, in one-letter code: Charged multivesicular body protein 3 (222 aa).

G2 carries the N-myristoyl glycine lipid modification. The tract at residues 2 to 113 (GLFGKTQEKP…LQKSTEVMKA (112 aa)) is intramolecular interaction with C-terminus. The stretch at 22–54 (KIRKEMRVVDRQIRDIQREEEKVKRSVKDAAKK) forms a coiled coil. Important for autoinhibitory function regions lie at residues 59-64 (VCVVLA) and 168-169 (IL). Residues 141–222 (EEMLEDTFES…MQSRLATLRS (82 aa)) are a coiled coil. The interval 151 to 220 (MDDQEEMEEE…EAMQSRLATL (70 aa)) is intramolecular interaction with N-terminus. The interval 151 to 222 (MDDQEEMEEE…MQSRLATLRS (72 aa)) is interaction with VPS4A. K179 participates in a covalent cross-link: Glycyl lysine isopeptide (Lys-Gly) (interchain with G-Cter in ubiquitin). A disordered region spans residues 180-222 (APSKVTDALPEPEPSGAMAASEDEEEEEEALEAMQSRLATLRS). Interaction with STAMBP stretches follow at residues 196 to 222 (AMAASEDEEEEEEALEAMQSRLATLRS), 203 to 207 (EEEEE), and 221 to 222 (RS). S200 carries the phosphoserine modification. Residues 200-210 (SEDEEEEEEAL) show a composition bias toward acidic residues. Positions 201–211 (EDEEEEEEALE) match the MIT-interacting motif motif.

This sequence belongs to the SNF7 family. As to quaternary structure, probable core component of the endosomal sorting required for transport complex III (ESCRT-III). ESCRT-III components are thought to multimerize to form a flat lattice on the perimeter membrane of the endosome. Several assembly forms of ESCRT-III may exist that interact and act sequentially. Forms a metastable monomer in solution; its core structure (without part of the putative autoinhibitory C-terminal acidic region) oligomerizes into a flat lattice via two different dimerization interfaces. In vitro, heteromerizes with CHMP2A (but not CHMP4) to form helical tubular structures that expose membrane-interacting sites on the outside whereas VPS4B can associate on the inside of the tubule. May interact with IGFBP7; the relevance of such interaction however remains unclear. Interacts with CHMP2A. Interacts with CHMP4A; the interaction requires the release of CHMP4A autoinhibition. Interacts with VPS4A. Interacts with STAMBP; the interaction appears to relieve the autoinhibition of CHMP3. Interacts with VTA1.

Its subcellular location is the cytoplasm. The protein resides in the cytosol. It localises to the membrane. The protein localises to the endosome. It is found in the late endosome membrane. Probable core component of the endosomal sorting required for transport complex III (ESCRT-III) which is involved in multivesicular bodies (MVBs) formation and sorting of endosomal cargo proteins into MVBs. MVBs contain intraluminal vesicles (ILVs) that are generated by invagination and scission from the limiting membrane of the endosome and mostly are delivered to lysosomes enabling degradation of membrane proteins, such as stimulated growth factor receptors, lysosomal enzymes and lipids. The MVB pathway appears to require the sequential function of ESCRT-O, -I,-II and -III complexes. ESCRT-III proteins mostly dissociate from the invaginating membrane before the ILV is released. The ESCRT machinery also functions in topologically equivalent membrane fission events, such as the terminal stages of cytokinesis and the budding of enveloped viruses (lentiviruses). ESCRT-III proteins are believed to mediate the necessary vesicle extrusion and/or membrane fission activities, possibly in conjunction with the AAA ATPase VPS4. Selectively binds to phosphatidylinositol 3,5-bisphosphate PtdIns(3,5)P2 and PtdIns(3,4)P2 in preference to other phosphoinositides tested. Involved in late stages of cytokinesis. Plays a role in endosomal sorting/trafficking of EGF receptor. The polypeptide is Charged multivesicular body protein 3 (CHMP3) (Pongo abelii (Sumatran orangutan)).